The sequence spans 191 residues: Lipoprotein signal peptidase (191 aa).

3 consecutive transmembrane segments (helical) span residues 26 to 46 (VWFPAVLVLVLIALDQWLKAW), 84 to 104 (AVPLALGRILVGLGILSYLLW), and 110 to 130 (FLTVVLSMIAAGAIGNSIDGL). Catalysis depends on residues aspartate 137 and aspartate 163. A helical membrane pass occupies residues 156–176 (FPIFNIADMCVVGGTILLLVA).

The protein belongs to the peptidase A8 family.

It localises to the cell membrane. The enzyme catalyses Release of signal peptides from bacterial membrane prolipoproteins. Hydrolyzes -Xaa-Yaa-Zaa-|-(S,diacylglyceryl)Cys-, in which Xaa is hydrophobic (preferably Leu), and Yaa (Ala or Ser) and Zaa (Gly or Ala) have small, neutral side chains.. It participates in protein modification; lipoprotein biosynthesis (signal peptide cleavage). In terms of biological role, this protein specifically catalyzes the removal of signal peptides from prolipoproteins. The chain is Lipoprotein signal peptidase from Deinococcus radiodurans (strain ATCC 13939 / DSM 20539 / JCM 16871 / CCUG 27074 / LMG 4051 / NBRC 15346 / NCIMB 9279 / VKM B-1422 / R1).